A 363-amino-acid chain; its full sequence is UDP-N-acetylglucosamine--N-acetylmuramyl-(pentapeptide) pyrophosphoryl-undecaprenol N-acetylglucosamine transferase (363 aa).

UDP-N-acetyl-alpha-D-glucosamine-binding positions include 10–12, asparagine 124, arginine 161, serine 195, and glutamine 291; that span reads TAG.

The protein belongs to the glycosyltransferase 28 family. MurG subfamily.

It is found in the cell membrane. The catalysed reaction is di-trans,octa-cis-undecaprenyl diphospho-N-acetyl-alpha-D-muramoyl-L-alanyl-D-glutamyl-meso-2,6-diaminopimeloyl-D-alanyl-D-alanine + UDP-N-acetyl-alpha-D-glucosamine = di-trans,octa-cis-undecaprenyl diphospho-[N-acetyl-alpha-D-glucosaminyl-(1-&gt;4)]-N-acetyl-alpha-D-muramoyl-L-alanyl-D-glutamyl-meso-2,6-diaminopimeloyl-D-alanyl-D-alanine + UDP + H(+). It functions in the pathway cell wall biogenesis; peptidoglycan biosynthesis. In terms of biological role, cell wall formation. Catalyzes the transfer of a GlcNAc subunit on undecaprenyl-pyrophosphoryl-MurNAc-pentapeptide (lipid intermediate I) to form undecaprenyl-pyrophosphoryl-MurNAc-(pentapeptide)GlcNAc (lipid intermediate II). This is UDP-N-acetylglucosamine--N-acetylmuramyl-(pentapeptide) pyrophosphoryl-undecaprenol N-acetylglucosamine transferase from Streptomyces avermitilis (strain ATCC 31267 / DSM 46492 / JCM 5070 / NBRC 14893 / NCIMB 12804 / NRRL 8165 / MA-4680).